The following is a 495-amino-acid chain: WD repeat-containing protein 37 (495 aa).

The segment at 1–34 (MPTESGSWAAARQTKQKRKSHSLSIKRTNSSEQD) is disordered. Positions 22–31 (SLSIKRTNSS) are enriched in polar residues. 2 WD repeats span residues 154–194 (GHRD…CLIK) and 197–236 (GHAG…PTPQ). A disordered region spans residues 237–268 (PMADTSQISGEEEVDFSDKDENDGDGDASSDC). The span at 246 to 264 (GEEEVDFSDKDENDGDGDA) shows a compositional bias: acidic residues. 5 WD repeats span residues 280-319 (SHQG…LVHS), 322-361 (GHDQ…IHSV), 366-404 (GHTD…SPIA), 407-446 (RTDS…LARL), and 453-494 (GHRR…LLQE).

The protein localises to the cytoplasm. The protein resides in the nucleus. The protein is WD repeat-containing protein 37 (wdr37) of Xenopus laevis (African clawed frog).